The following is a 581-amino-acid chain: Bestrophin-1 (581 aa).

Residues 1-31 (MTVTYSSQVANARLGSFSRLLLCWRGSIYKL) are Cytoplasmic-facing. Alanine 10 contacts Ca(2+). A helical membrane pass occupies residues 32-51 (LYGEFLIFLLCYYIIRFIYR). At 52 to 60 (MALTDEQQV) the chain is on the extracellular side. Residues 61–82 (IFEKLTLYCDSYIQLIPISFVL) traverse the membrane as a helical segment. The Cytoplasmic portion of the chain corresponds to 83–237 (GFYVTLVVTR…DWISVPLVYT (155 aa)). The helical transmembrane segment at 238 to 255 (QVVTVAVYSFFLACLVGR) threads the bilayer. The Extracellular segment spans residues 256–274 (QFLNPAKAYPGHEMDLVVP). Residues 275 to 288 (LFTFLQFFFYAGWL) traverse the membrane as a helical segment. Topologically, residues 289–581 (KVAEQLINPF…ALENRDEAHS (293 aa)) are cytoplasmic. Positions 293, 296, 301, and 304 each coordinate Ca(2+). Residues 416-440 (EGHFHEGHPKNLRGARLDSSDQEDS) are disordered.

It belongs to the anion channel-forming bestrophin (TC 1.A.46) family. Calcium-sensitive chloride channel subfamily. In terms of assembly, interacts with YWHAG; this interaction promotes the ligand-gated L-glutamate channel activity leading to the positive regulation of NMDA glutamate receptor activity through the L-glutamate secretion. Post-translationally, phosphorylated (in vitro). In terms of processing, dephosphorylated (in vitro) by PP2A.

The protein resides in the cell membrane. The protein localises to the basolateral cell membrane. The catalysed reaction is chloride(in) = chloride(out). It catalyses the reaction hydrogencarbonate(in) = hydrogencarbonate(out). It carries out the reaction 4-aminobutanoate(in) = 4-aminobutanoate(out). The enzyme catalyses L-glutamate(out) = L-glutamate(in). Functionally, ligand-gated anion channel that allows the movement of anions across cell membranes when activated by calcium (Ca2+). Allows the movement of chloride and hydrogencarbonate. Found in a partially open conformation leading to significantly smaller chloride movement. Upon F2R/PAR-1 activation, the sequestered calcium is released into the cytosol of astrocytes, leading to the (Ca2+)-dependent release of L-glutamate into the synaptic cleft that targets the neuronal postsynaptic GRIN2A/NMDAR receptor resulting in the synaptic plasticity regulation. Upon activation of the norepinephrine-alpha-1 adrenergic receptor signaling pathway, transports as well D-serine than L-glutamate in a (Ca2+)-dependent manner, leading to activation of adjacent NMDAR receptors and therefore regulates the heterosynaptic long-term depression and metaplasticity during initial memory acquisition. Releases the 4-aminobutanoate neurotransmitter in a (Ca2+)-dependent manner, and participates in its tonic release from cerebellar glial cells. The chain is Bestrophin-1 from Sus scrofa (Pig).